Reading from the N-terminus, the 152-residue chain is Small ribosomal subunit protein uS15 (152 aa).

Basic residues predominate over residues 1-16; that stretch reads MARIHARRRGKSGSKR. The interval 1-21 is disordered; it reads MARIHARRRGKSGSKRIYRDS.

Belongs to the universal ribosomal protein uS15 family. In terms of assembly, part of the 30S ribosomal subunit.

The sequence is that of Small ribosomal subunit protein uS15 from Archaeoglobus fulgidus (strain ATCC 49558 / DSM 4304 / JCM 9628 / NBRC 100126 / VC-16).